We begin with the raw amino-acid sequence, 402 residues long: 26S proteasome regulatory subunit 8 (402 aa).

ATP is bound at residue 186 to 193; it reads GPPGTGKT.

Belongs to the AAA ATPase family.

The protein localises to the cytoplasm. It is found in the nucleus. Functionally, the 26S proteasome is involved in the ATP-dependent degradation of ubiquitinated proteins. The regulatory (or ATPase) complex confers ATP dependency and substrate specificity to the 26S complex. This Manduca sexta (Tobacco hawkmoth) protein is 26S proteasome regulatory subunit 8.